A 103-amino-acid chain; its full sequence is Pyrimidine/purine nucleoside phosphorylase (103 aa).

Belongs to the nucleoside phosphorylase PpnP family.

It catalyses the reaction a purine D-ribonucleoside + phosphate = a purine nucleobase + alpha-D-ribose 1-phosphate. It carries out the reaction adenosine + phosphate = alpha-D-ribose 1-phosphate + adenine. The enzyme catalyses cytidine + phosphate = cytosine + alpha-D-ribose 1-phosphate. The catalysed reaction is guanosine + phosphate = alpha-D-ribose 1-phosphate + guanine. It catalyses the reaction inosine + phosphate = alpha-D-ribose 1-phosphate + hypoxanthine. It carries out the reaction thymidine + phosphate = 2-deoxy-alpha-D-ribose 1-phosphate + thymine. The enzyme catalyses uridine + phosphate = alpha-D-ribose 1-phosphate + uracil. The catalysed reaction is xanthosine + phosphate = alpha-D-ribose 1-phosphate + xanthine. Catalyzes the phosphorolysis of diverse nucleosides, yielding D-ribose 1-phosphate and the respective free bases. Can use uridine, adenosine, guanosine, cytidine, thymidine, inosine and xanthosine as substrates. Also catalyzes the reverse reactions. The protein is Pyrimidine/purine nucleoside phosphorylase of Shewanella sp. (strain W3-18-1).